The chain runs to 374 residues: MEILRIEPTPSPNTMKVVLSYTREDKLSNTYKKVEENQPRFINQLLSIDGITSIFHVMNFLAVDKAPKADWEDILPDIKAAFSGESQVLESGKDPQIDNHFGEIKAELLTFKGIPYQIKLTSADQELREQLPQTYVDHMTQAQTKHDNIVFMRKWLDLGNRYGNIEEVMDGVLEEVLATYPESQLPVLVKHALEENHATNNYHFYRHVSLDEYHATDNWKTRLRMLNHFPKPTFEDIPLLDLALSDEKVPVRRQAIVLLGMIESKEILPYLYKGLRDKSPAVRRTAGDCISDLGYPEALPEMVLLLDDPQKIVRWRAAMFIFDEGNAEQLPALKAHINDNAFEVKLQIEMAISRIENGDEALGSVWKQMTNRTI.

It belongs to the CvfC family.

Its function is as follows. Required for hemolysin production. This is Conserved virulence factor C (cvfC) from Staphylococcus aureus (strain MRSA252).